The following is a 358-amino-acid chain: Methionine aminopeptidase 2 (358 aa).

A substrate-binding site is contributed by histidine 109. Positions 130, 141, and 210 each coordinate a divalent metal cation. Histidine 218 contacts substrate. Residues glutamate 243 and glutamate 339 each contribute to the a divalent metal cation site.

The protein belongs to the peptidase M24A family. Methionine aminopeptidase eukaryotic type 2 subfamily. The cofactor is Co(2+). It depends on Zn(2+) as a cofactor. Mn(2+) serves as cofactor. Fe(2+) is required as a cofactor.

It is found in the cytoplasm. The catalysed reaction is Release of N-terminal amino acids, preferentially methionine, from peptides and arylamides.. Irreversibly inhibited by the fungal metabolite fumagillin and the fumagillin analog TNP470, antiangiogenic drugs. Cotranslationally removes the N-terminal methionine from nascent proteins. The N-terminal methionine is often cleaved when the second residue in the primary sequence is small and uncharged (Met-Ala-, Cys, Gly, Pro, Ser, Thr, or Val). The chain is Methionine aminopeptidase 2 from Encephalitozoon hellem (strain ATCC 50504) (Microsporidian parasite).